A 374-amino-acid chain; its full sequence is MATDTAVTGAPETTELRLASGNGPVTRTVLRTPVRDALPSEVPLIDISPIFSTCVADRKAVARKIHDAATNIGFFYIQNHRVPSQDIDLAYSASQDFFRQEMEVKVEADAKDGPFDSGYRGPGTQRVNPTEGADLRETYSILYDPMLDPTVPDPANIPEPASRFLHLGRAPFESTATLPHFKDAFVRYFQACLVLARALTRAFALSLDLPESAFDGKVQYPDASLEINFYPPISTGHAVSAPGDADTRVSIGSHTDFLLFTILWQDSNGGLQVLNREGQWIRAIPVEGTFVVNIGDYLQRVTNDKYVSTVHRAQNFSGRERVSMPFFWGFGMHESCQVLRNCCGEDEKSKYDEVKCVDWVSRRLGNLFDLSDKG.

The segment at 111 to 130 (KDGPFDSGYRGPGTQRVNPT) is disordered. Positions 220–330 (YPDASLEINF…RVSMPFFWGF (111 aa)) constitute a Fe2OG dioxygenase domain. Fe cation is bound by residues His254, Asp256, and His311. Arg321 lines the 2-oxoglutarate pocket.

This sequence belongs to the iron/ascorbate-dependent oxidoreductase family. It depends on Fe(2+) as a cofactor.

It carries out the reaction peramine + 2-oxoglutarate + O2 = 8-hydroxyperamine + succinate + CO2. The protein operates within secondary metabolite biosynthesis. In terms of biological role, 2-oxoglutarate-Fe(II) type oxidoreductase; part of the gene cluster that mediates the biosynthesis of pyrrolopyrazines, secondary metabolites showing insecticidal activity. Within the pathway, ppzC uses peramine as substrate for hydroxylation to yield the novel analog 8-hydroxyperamine. The single multifunctional NRPS ppzA is sufficient to produce peramine via condensation of 1-pyrroline-5-carboxylate and arginine, N-methylation of the alpha-amino group of arginine and reduction of the thioester and the cyclization to form an iminium ion resulting in release from the peptide synthetase. Deprotonation of this intermediate and oxidation of the pyrroline ring would give rise to peramine. In Epichloe species that produce only peramine, the peramine synthetase gene is not localized in a gene cluster, in contrast to Metarhizium species that contain additional pyrrolopyrazine biosynthesis genes. The 2-oxoglutarate-Fe(II) type oxidoreductase ppzC hydroxylates peramine to yield the newly identified compound 8-hydroxyperamine whereas ppzD converts L-proline into trans-4-hydroxy-L-proline, a precursor of peramine biosynthesis. The sequence is that of 2-oxoglutarate-Fe(II) type oxidoreductase ppzC from Metarhizium rileyi (strain RCEF 4871) (Nomuraea rileyi).